The following is a 360-amino-acid chain: DNA replication and repair protein RecF (360 aa).

Position 30-37 (30-37) interacts with ATP; that stretch reads GANGSGKT.

It belongs to the RecF family.

The protein resides in the cytoplasm. In terms of biological role, the RecF protein is involved in DNA metabolism; it is required for DNA replication and normal SOS inducibility. RecF binds preferentially to single-stranded, linear DNA. It also seems to bind ATP. This Acinetobacter baumannii (strain ATCC 17978 / DSM 105126 / CIP 53.77 / LMG 1025 / NCDC KC755 / 5377) protein is DNA replication and repair protein RecF.